A 179-amino-acid chain; its full sequence is MSRIGKSPIPIPDKVSVSLDGLAVTVKGPKGELKRTLPDGVTVNQVDNTIVVAPTSEKRQSRERHGLCRTLVANMIEGVSKGYSKKLEIVGVGSRAQVKGKTLVVSAGYSHPVEMLAPEGITFAVENNTNVTVSGTDKELVGNEAAKIRAIRPPEPYKGKGIKYAGERILRKAGKSGKK.

This sequence belongs to the universal ribosomal protein uL6 family. As to quaternary structure, part of the 50S ribosomal subunit.

Functionally, this protein binds to the 23S rRNA, and is important in its secondary structure. It is located near the subunit interface in the base of the L7/L12 stalk, and near the tRNA binding site of the peptidyltransferase center. The polypeptide is Large ribosomal subunit protein uL6 (Synechococcus sp. (strain WH7803)).